A 115-amino-acid polypeptide reads, in one-letter code: Parathyroid hormone (115 aa).

A signal peptide spans 1 to 25 (MMSAKDMVKVMIVMLAICFLARSDG). A propeptide spanning residues 26-31 (KSVKKR) is cleaved from the precursor. The interval 51–69 (RVEWLRKKLQDVHNFVALG) is important for receptor binding. The interval 77–99 (GSSQRPRKKEDNVLVESHQKSLG) is disordered. Residues 84-99 (KKEDNVLVESHQKSLG) show a composition bias toward basic and acidic residues.

The protein belongs to the parathyroid hormone family. Interacts with PTH1R (via N-terminal extracellular domain).

The protein localises to the secreted. Parathyroid hormone elevates calcium level by dissolving the salts in bone and preventing their renal excretion. Acts by binding to its receptor, PTH1R, activating G protein-coupled receptor signaling. Stimulates [1-14C]-2-deoxy-D-glucose (2DG) transport and glycogen synthesis in osteoblastic cells. This Bos taurus (Bovine) protein is Parathyroid hormone.